Here is a 513-residue protein sequence, read N- to C-terminus: GMP synthase [glutamine-hydrolyzing] (513 aa).

The region spanning 7–197 is the Glutamine amidotransferase type-1 domain; the sequence is TILVLDFGGQ…LFGVCGCTGE (191 aa). The active-site Nucleophile is Cys84. Residues His171 and Glu173 contribute to the active site. The region spanning 198-387 is the GMPS ATP-PPase domain; that stretch reads WTMENFIEEQ…LGLPEDIVWR (190 aa). An ATP-binding site is contributed by 225–231; sequence SGGVDSS.

In terms of assembly, homodimer.

It carries out the reaction XMP + L-glutamine + ATP + H2O = GMP + L-glutamate + AMP + diphosphate + 2 H(+). Its pathway is purine metabolism; GMP biosynthesis; GMP from XMP (L-Gln route): step 1/1. Its function is as follows. Catalyzes the synthesis of GMP from XMP. This Heliobacterium modesticaldum (strain ATCC 51547 / Ice1) protein is GMP synthase [glutamine-hydrolyzing].